The primary structure comprises 497 residues: Protein nucleotidyltransferase YdiU (497 aa).

Residues glycine 88, glycine 90, arginine 91, lysine 110, aspartate 122, glycine 123, arginine 173, and arginine 180 each coordinate ATP. The active-site Proton acceptor is aspartate 249. Mg(2+)-binding residues include asparagine 250 and aspartate 259. ATP is bound at residue aspartate 259. A disordered region spans residues phenylalanine 477–threonine 497.

It belongs to the SELO family. It depends on Mg(2+) as a cofactor. Mn(2+) serves as cofactor.

It carries out the reaction L-seryl-[protein] + ATP = 3-O-(5'-adenylyl)-L-seryl-[protein] + diphosphate. It catalyses the reaction L-threonyl-[protein] + ATP = 3-O-(5'-adenylyl)-L-threonyl-[protein] + diphosphate. The enzyme catalyses L-tyrosyl-[protein] + ATP = O-(5'-adenylyl)-L-tyrosyl-[protein] + diphosphate. The catalysed reaction is L-histidyl-[protein] + UTP = N(tele)-(5'-uridylyl)-L-histidyl-[protein] + diphosphate. It carries out the reaction L-seryl-[protein] + UTP = O-(5'-uridylyl)-L-seryl-[protein] + diphosphate. It catalyses the reaction L-tyrosyl-[protein] + UTP = O-(5'-uridylyl)-L-tyrosyl-[protein] + diphosphate. In terms of biological role, nucleotidyltransferase involved in the post-translational modification of proteins. It can catalyze the addition of adenosine monophosphate (AMP) or uridine monophosphate (UMP) to a protein, resulting in modifications known as AMPylation and UMPylation. This is Protein nucleotidyltransferase YdiU from Methylorubrum extorquens (strain PA1) (Methylobacterium extorquens).